A 362-amino-acid chain; its full sequence is GTP 3',8-cyclase (362 aa).

The Radical SAM core domain maps to 8–228; it reads SLGRPLRDLR…ARISSHWPID (221 aa). Position 17 (R17) interacts with GTP. C24 and C28 together coordinate [4Fe-4S] cluster. An S-adenosyl-L-methionine-binding site is contributed by Y30. C31 is a binding site for [4Fe-4S] cluster. Residue R71 participates in GTP binding. Residue G75 participates in S-adenosyl-L-methionine binding. Residue T102 participates in GTP binding. Residue S126 coordinates S-adenosyl-L-methionine. GTP is bound at residue K164. M198 is a binding site for S-adenosyl-L-methionine. [4Fe-4S] cluster is bound by residues C262 and C265. Residue 267–269 participates in GTP binding; it reads RLR. [4Fe-4S] cluster is bound at residue C279. The disordered stretch occupies residues 325-362; that stretch reads ALDSDGSREDADESEASAVPGRSTHPGHRKVEMSYIGG.

It belongs to the radical SAM superfamily. MoaA family. As to quaternary structure, monomer and homodimer. It depends on [4Fe-4S] cluster as a cofactor.

It carries out the reaction GTP + AH2 + S-adenosyl-L-methionine = (8S)-3',8-cyclo-7,8-dihydroguanosine 5'-triphosphate + 5'-deoxyadenosine + L-methionine + A + H(+). It participates in cofactor biosynthesis; molybdopterin biosynthesis. In terms of biological role, catalyzes the cyclization of GTP to (8S)-3',8-cyclo-7,8-dihydroguanosine 5'-triphosphate. In Acidothermus cellulolyticus (strain ATCC 43068 / DSM 8971 / 11B), this protein is GTP 3',8-cyclase.